The primary structure comprises 120 residues: Large ribosomal subunit protein bL19 (120 aa).

Belongs to the bacterial ribosomal protein bL19 family.

Its function is as follows. This protein is located at the 30S-50S ribosomal subunit interface and may play a role in the structure and function of the aminoacyl-tRNA binding site. The polypeptide is Large ribosomal subunit protein bL19 (Thermosynechococcus vestitus (strain NIES-2133 / IAM M-273 / BP-1)).